Here is a 748-residue protein sequence, read N- to C-terminus: Pleckstrin homology domain-containing family M member 3 (748 aa).

Disordered regions lie at residues 88–107 (HAKE…PLLS) and 129–187 (NDSL…RNKN). Composition is skewed to basic and acidic residues over residues 129–140 (NDSLDHLEDAPK) and 148–159 (SRSDVSHIDWKN). Residues 167-180 (QRSSSQGMHCTSPF) are compositionally biased toward polar residues. PH domains follow at residues 200–297 (NILK…EAIC) and 348–443 (NIIK…SAAN). The Phorbol-ester/DAG-type zinc finger occupies 656 to 709 (SHVYSCSLCSQKGFICEICNNGEILYPFEENSTSRCENCGAVFHSDCKVRTVPC).

It is found in the cytoplasm. The protein resides in the golgi apparatus. Its subcellular location is the cell membrane. Functionally, may play a role during muscle differentiation. In Xenopus laevis (African clawed frog), this protein is Pleckstrin homology domain-containing family M member 3 (plekhm3).